A 154-amino-acid chain; its full sequence is MutT-like protein (154 aa).

Residues 15 to 136 (PLHSVSVAGV…YAIRLLDALD (122 aa)) form the Nudix hydrolase domain. Residues Gly-48, Glu-63, Glu-66, and Glu-67 each contribute to the Mg(2+) site. The Nudix box signature appears at 48–69 (GVLELDETPETGVAREVWEETG).

Belongs to the Nudix hydrolase family.

In Streptomyces ambofaciens, this protein is MutT-like protein.